A 299-amino-acid chain; its full sequence is Phosphatidylcholine-sterol acyltransferase (299 aa).

N30 carries an N-linked (GlcNAc...) asparagine glycan. The active-site Nucleophile is S127. N-linked (GlcNAc...) asparagine glycosylation is present at N185. A disulfide bridge links C226 with C269. Active-site charge relay system residues include D258 and H290.

This sequence belongs to the AB hydrolase superfamily. Lipase family.

Its subcellular location is the secreted. The catalysed reaction is a sterol + a 1,2-diacyl-sn-glycero-3-phosphocholine = a sterol ester + a 1-acyl-sn-glycero-3-phosphocholine. Its activity is regulated as follows. APOA1 is the most potent activator in plasma. Also activated by APOE, APOC1 and APOA4. Functionally, central enzyme in the extracellular metabolism of plasma lipoproteins. Synthesized mainly in the liver and secreted into plasma where it converts cholesterol and phosphatidylcholines (lecithins) to cholesteryl esters and lysophosphatidylcholines on the surface of high and low density lipoproteins (HDLs and LDLs). The cholesterol ester is then transported back to the liver. Has a preference for plasma 16:0-18:2 or 18:O-18:2 phosphatidylcholines. Also produced in the brain by primary astrocytes, and esterifies free cholesterol on nascent APOE-containing lipoproteins secreted from glia and influences cerebral spinal fluid (CSF) APOE- and APOA1 levels. Together with APOE and the cholesterol transporter ABCA1, plays a key role in the maturation of glial-derived, nascent lipoproteins. Required for remodeling high-density lipoprotein particles into their spherical forms. The polypeptide is Phosphatidylcholine-sterol acyltransferase (LCAT) (Eliomys quercinus (Garden dormouse)).